A 62-amino-acid polypeptide reads, in one-letter code: Large ribosomal subunit protein uL29 (62 aa).

It belongs to the universal ribosomal protein uL29 family.

The chain is Large ribosomal subunit protein uL29 from Geotalea daltonii (strain DSM 22248 / JCM 15807 / FRC-32) (Geobacter daltonii).